The chain runs to 425 residues: Riboflavin biosynthesis protein RibBA (425 aa).

Positions 1–204 (MTRLDSVERA…IADLIEWRRK (204 aa)) are DHBP synthase. D-ribulose 5-phosphate contacts are provided by residues 28–29 (RE), Asp-33, 141–145 (RPGHT), and Glu-165. A Mg(2+)-binding site is contributed by Glu-29. His-144 contributes to the Mg(2+) binding site. Residues 205-425 (HEKHIERVAE…HLPGEFGGAL (221 aa)) form a GTP cyclohydrolase II region. A GTP-binding site is contributed by 259–263 (RVHSE). Residues Cys-264, Cys-275, and Cys-277 each coordinate Zn(2+). GTP is bound by residues Gln-280, 303-305 (EGR), and Thr-325. Catalysis depends on Asp-337, which acts as the Proton acceptor; for GTP cyclohydrolase activity. The active-site Nucleophile; for GTP cyclohydrolase activity is the Arg-339. Residues Thr-360 and Lys-365 each contribute to the GTP site.

The protein in the N-terminal section; belongs to the DHBP synthase family. This sequence in the C-terminal section; belongs to the GTP cyclohydrolase II family. It depends on Mg(2+) as a cofactor. Mn(2+) serves as cofactor. Requires Zn(2+) as cofactor.

It carries out the reaction D-ribulose 5-phosphate = (2S)-2-hydroxy-3-oxobutyl phosphate + formate + H(+). The catalysed reaction is GTP + 4 H2O = 2,5-diamino-6-hydroxy-4-(5-phosphoribosylamino)-pyrimidine + formate + 2 phosphate + 3 H(+). It functions in the pathway cofactor biosynthesis; riboflavin biosynthesis; 2-hydroxy-3-oxobutyl phosphate from D-ribulose 5-phosphate: step 1/1. The protein operates within cofactor biosynthesis; riboflavin biosynthesis; 5-amino-6-(D-ribitylamino)uracil from GTP: step 1/4. Catalyzes the conversion of D-ribulose 5-phosphate to formate and 3,4-dihydroxy-2-butanone 4-phosphate. Functionally, catalyzes the conversion of GTP to 2,5-diamino-6-ribosylamino-4(3H)-pyrimidinone 5'-phosphate (DARP), formate and pyrophosphate. In Mycobacterium bovis (strain ATCC BAA-935 / AF2122/97), this protein is Riboflavin biosynthesis protein RibBA.